The chain runs to 568 residues: Protein KATNIP homolog (568 aa).

Positions 1–20 are enriched in basic and acidic residues; that stretch reads MSDSDLKEIEKNAENIKLEP. The disordered stretch occupies residues 1–30; it reads MSDSDLKEIEKNAENIKLEPAEDEVNEEDQ. The segment covering 21-30 has biased composition (acidic residues); the sequence is AEDEVNEEDQ.

Expressed in most ciliated neuronal cells. Not expressed in non-ciliated cells.

It localises to the cytoplasm. It is found in the cytoskeleton. The protein resides in the cilium axoneme. Its subcellular location is the cilium basal body. Functionally, may regulate ciliary A-tubule number and, along with arl-13, controls cilium integrity. This is Protein KATNIP homolog from Caenorhabditis elegans.